We begin with the raw amino-acid sequence, 314 residues long: Trihelix transcription factor ASR3 (314 aa).

A disordered region spans residues 1–34 (MALEQLGLGVSAVDGGENSSAPSNDGGDDGVKTA). Residues 38–104 (RWTRQEILVL…QCRKRWSNLA (67 aa)) form the Myb-like domain. Positions 84–91 (CKRHGVNR) match the Nuclear localization signal motif. The short motif at 161-165 (LSLGL) is the EAR 1 element. Thr189 carries the post-translational modification Phosphothreonine; by MAPK4. The interval 207–255 (CVADQGRVKEKQPEAANVEGGSTSQEERKRKRTSFGEKEEEEEEGETKK) is disordered. The short motif at 280–284 (LNLKL) is the EAR 2 element.

As to quaternary structure, homodimer. Interacts directly with MPK4. Phosphorylated on Thr-189 by MPK4 in response to microbe-associated molecular patterns (MAMPs, e.g. flg22, elf18, chitin, and LPS). This phosphorylation enhances DNA-binding and thus negatively regulates immune gene expression.

It localises to the nucleus. Functionally, transcriptional repressor that binds DNA and plays a negative role in regulating microbe-associated molecular patterns-(MAMPs, e.g. flg22, elf18, chitin, and LPS) triggered immunity (PTI) by negatively regulating immune gene expression. In Arabidopsis thaliana (Mouse-ear cress), this protein is Trihelix transcription factor ASR3.